Reading from the N-terminus, the 1484-residue chain is Ral GTPase-activating protein subunit beta (1484 aa).

2 disordered regions span residues 355 to 437 (PRSD…APRR) and 697 to 728 (GGEN…PDSE). Residue Ser-359 is modified to Phosphoserine. 2 positions are modified to phosphothreonine: Thr-363 and Thr-379. Composition is skewed to polar residues over residues 369–381 (SMPQ…TTPP), 392–428 (NKAT…TSSE), and 701–725 (NLKS…PTTP). A phosphoserine mark is found at Ser-421 and Ser-710. Thr-724 bears the Phosphothreonine mark. In terms of domain architecture, Rap-GAP spans 1138-1382 (IGYLDLLPCR…TTLEKEVPVI (245 aa)). Residue Ser-1275 is modified to Phosphoserine. A disordered region spans residues 1301–1325 (DSLNSSQRLSPSSRMKKLPQGRPVP). Residues 1302–1313 (SLNSSQRLSPSS) show a composition bias toward low complexity.

As to quaternary structure, component of the heterodimeric RalGAP1 complex with RALGAPA1 and of the heterodimeric RalGAP2 complex with RALGAPA2. Heterodimerization is required for activity. As to expression, detected in brain, thymus, lung, heart, spleen, liver and testis (at protein level).

Its function is as follows. Non-catalytic subunit of the heterodimeric RalGAP1 and RalGAP2 complexes which act as GTPase activators for the Ras-like small GTPases RALA and RALB. In Rattus norvegicus (Rat), this protein is Ral GTPase-activating protein subunit beta.